A 435-amino-acid chain; its full sequence is 4-hydroxy-3-methylbut-2-en-1-yl diphosphate synthase (flavodoxin) (435 aa).

Basic and acidic residues predominate over residues 1–15; that stretch reads MTDVDLRARPQEGMK. Positions 1 to 24 are disordered; that stretch reads MTDVDLRARPQEGMKEIPAGPKGR. [4Fe-4S] cluster contacts are provided by Cys-316, Cys-319, Cys-362, and Glu-369.

The protein belongs to the IspG family. Requires [4Fe-4S] cluster as cofactor.

The enzyme catalyses (2E)-4-hydroxy-3-methylbut-2-enyl diphosphate + oxidized [flavodoxin] + H2O + 2 H(+) = 2-C-methyl-D-erythritol 2,4-cyclic diphosphate + reduced [flavodoxin]. It participates in isoprenoid biosynthesis; isopentenyl diphosphate biosynthesis via DXP pathway; isopentenyl diphosphate from 1-deoxy-D-xylulose 5-phosphate: step 5/6. In terms of biological role, converts 2C-methyl-D-erythritol 2,4-cyclodiphosphate (ME-2,4cPP) into 1-hydroxy-2-methyl-2-(E)-butenyl 4-diphosphate. The chain is 4-hydroxy-3-methylbut-2-en-1-yl diphosphate synthase (flavodoxin) from Afipia carboxidovorans (strain ATCC 49405 / DSM 1227 / KCTC 32145 / OM5) (Oligotropha carboxidovorans).